The primary structure comprises 161 residues: 3-isopropylmalate dehydratase small subunit (161 aa).

Belongs to the LeuD family. LeuD type 2 subfamily. In terms of assembly, heterodimer of LeuC and LeuD.

The enzyme catalyses (2R,3S)-3-isopropylmalate = (2S)-2-isopropylmalate. It participates in amino-acid biosynthesis; L-leucine biosynthesis; L-leucine from 3-methyl-2-oxobutanoate: step 2/4. Catalyzes the isomerization between 2-isopropylmalate and 3-isopropylmalate, via the formation of 2-isopropylmaleate. The polypeptide is 3-isopropylmalate dehydratase small subunit (Clostridium botulinum (strain Eklund 17B / Type B)).